The following is a 357-amino-acid chain: 5-hydroxytryptamine receptor 5A (357 aa).

Over methionine 1 to leucine 36 the chain is Extracellular. Residues asparagine 6 and asparagine 21 are each glycosylated (N-linked (GlcNAc...) asparagine). A helical transmembrane segment spans residues serine 37–alanine 63. Residues threonine 64–histidine 76 are Cytoplasmic-facing. The chain crosses the membrane as a helical span at residues asparagine 77 to serine 103. Residues glycine 104–cysteine 114 lie on the Extracellular side of the membrane. An intrachain disulfide couples cysteine 114 to cysteine 192. A helical transmembrane segment spans residues glutamine 115–leucine 137. Aspartate 121 contacts serotonin. Residues aspartate 138–lysine 155 are Cytoplasmic-facing. Residues cysteine 156–proline 176 form a helical membrane-spanning segment. Over leucine 177–proline 198 the chain is Extracellular. The chain crosses the membrane as a helical span at residues serine 199–tyrosine 220. The Cytoplasmic segment spans residues tryptophan 221–valine 287. Residues glycine 288–serine 312 form a helical membrane-spanning segment. Residues cysteine 313–aspartate 314 are Extracellular-facing. A helical membrane pass occupies residues isoleucine 315–threonine 339. Topologically, residues alanine 340–histidine 357 are cytoplasmic.

This sequence belongs to the G-protein coupled receptor 1 family.

It localises to the cell membrane. Functionally, G-protein coupled receptor for 5-hydroxytryptamine (serotonin), a biogenic hormone that functions as a neurotransmitter, a hormone and a mitogen. Also functions as a receptor for ergot alkaloid derivatives and other psychoactive substances. Ligand binding causes a conformation change that triggers signaling via guanine nucleotide-binding proteins (G proteins) and modulates the activity of downstream effectors. HTR5A is coupled to G(i)/G(o) G alpha proteins and mediates inhibitory neurotransmission: signaling inhibits adenylate cyclase activity and activates a phosphatidylinositol-calcium second messenger system that regulates the release of Ca(2+) ions from intracellular stores. This Homo sapiens (Human) protein is 5-hydroxytryptamine receptor 5A.